Here is a 931-residue protein sequence, read N- to C-terminus: Mitochondrial cox1 translation regulator ppr4 (931 aa).

The transit peptide at 1–16 directs the protein to the mitochondrion; that stretch reads MSKSFAYRHIWCFWRF. PPR repeat units lie at residues 247 to 277, 282 to 316, 429 to 461, 462 to 496, 497 to 531, 598 to 632, and 683 to 713; these read NEVLYTQYLGFLTKRGDYQIAIYMFDEMYRT, SFTACRLMIESLVRQNKFEEAISLYKKIIAKRPKI, HLLNCFLNSSTVSLDVSMVLELLRDLKKKKIKV, DERTLVICITIFSRRKDLFAMEKIHQYFSDQGIKT, SNQAYAALLDAYIEAEDTEKIELYLGKIRRLGITE, NVVHYSIAATVLGNLNQLDQLLLLEKRMESEGKAP, and PPSLFSSLIKEYTSLGDIKEAKQVLSTYLEY.

In terms of assembly, component of the MRH5C complex, composed of mrh5, ppr4, mtf2, and sls1. Proteins mtf2 and sls1 form a subcomplex that serves as a scaffold to bring mrh5 and ppr4 together. The MRH5C complex associates with the small subunit of the mitochondrial ribosome.

It localises to the mitochondrion. In terms of biological role, RNA-binding translation activation factor that as part of the MRH5C complex specifically recruits cox1 mRNA to the mitochondrial ribosome for translation initiation. The sequence is that of Mitochondrial cox1 translation regulator ppr4 from Schizosaccharomyces pombe (strain 972 / ATCC 24843) (Fission yeast).